We begin with the raw amino-acid sequence, 68 residues long: Putative alpha-conotoxin Qc alphaL-1 (68 aa).

The first 21 residues, 1–21 (MGMRMMFTMFLLVVLATTVVS), serve as a signal peptide directing secretion. Residues 22 to 49 (INLDHAFDGRNAAANNKATDLMARTVRR) constitute a propeptide that is removed on maturation. An intrachain disulfide couples Cys-51 to Cys-64.

Belongs to the conotoxin A superfamily. As to expression, expressed by the venom duct.

Its subcellular location is the secreted. Functionally, alpha-conotoxins act on postsynaptic membranes, they bind to the nicotinic acetylcholine receptors (nAChR) and thus inhibit them. This chain is Putative alpha-conotoxin Qc alphaL-1, found in Conus quercinus (Oak cone).